The sequence spans 246 residues: Myelin-oligodendrocyte glycoprotein (246 aa).

Residues 1–28 (MASLSRPSLPSCLCSFLLLLLQVSSSYA) form the signal peptide. Over 29 to 153 (GQFRVIGPRH…EDPFYWVSPG (125 aa)) the chain is Extracellular. Residues 30-144 (QFRVIGPRHP…EEAAMELKVE (115 aa)) form the Ig-like V-type domain. Cysteines 52 and 126 form a disulfide. Residue N59 is glycosylated (N-linked (GlcNAc...) asparagine). A helical membrane pass occupies residues 154-174 (VLVLLAVLPVLLLQIAVGLVF). The Cytoplasmic segment spans residues 175–209 (LCLQYRLRGKLRAEIENLHRTFDPHFLRVPCWKIT). The chain crosses the membrane as a helical span at residues 210–230 (LFVIVPVLGPLVALIICYNWL). Topologically, residues 231-246 (HRRLAGQFLEELRNPF) are extracellular.

This sequence belongs to the immunoglobulin superfamily. BTN/MOG family. In terms of assembly, homodimer.

It is found in the membrane. Functionally, minor component of the myelin sheath. May be involved in completion and/or maintenance of the myelin sheath and in cell-cell communication. Mediates homophilic cell-cell adhesion. The chain is Myelin-oligodendrocyte glycoprotein (MOG) from Pongo abelii (Sumatran orangutan).